Consider the following 3579-residue polypeptide: Protocadherin-like wing polarity protein stan (3579 aa).

An N-terminal signal peptide occupies residues 1-29 (MQTREFPQRPLGLLLVLLVVLLQSSLIKS). The Extracellular portion of the chain corresponds to 30 to 2816 (YLIIVHEDTP…EPSLLVQITS (2787 aa)). N-linked (GlcNAc...) asparagine glycosylation is found at Asn46, Asn179, and Asn340. Cadherin domains are found at residues 360-464 (EQAL…SPTF), 465-581 (EAEQ…YPQF), 582-689 (SERT…APRF), 690-794 (YTSQ…DPAF), 795-897 (NPKY…APIF), 898-1007 (ENAP…APAF), 1008-1113 (KSPL…PPTF), and 1114-1220 (ASDK…APVL). Asn671 carries an N-linked (GlcNAc...) asparagine glycan. Asn886 carries N-linked (GlcNAc...) asparagine glycosylation. N-linked (GlcNAc...) asparagine glycosylation is found at Asn1269, Asn1374, and Asn1441. Positions 1482–1518 (EVDLCYSDPCQNGGTCVRREGGYTCVCPSTHTGQNCE) constitute an EGF-like 1; calcium-binding domain. Intrachain disulfides connect Cys1486/Cys1497, Cys1491/Cys1506, and Cys1508/Cys1517. The Laminin G-like 1 domain occupies 1556–1753 (LRARAFGRNS…VADNGTLAGC (198 aa)). 3 N-linked (GlcNAc...) asparagine glycosylation sites follow: Asn1650, Asn1678, and Asn1747. Cystine bridges form between Cys1727/Cys1753, Cys1760/Cys1771, Cys1765/Cys1780, and Cys1782/Cys1791. An EGF-like 2; calcium-binding domain is found at 1756–1792 (KAPLCQSEPCFNGGTCREGWGTYSCECPEGYAGNSCQ). The Laminin G-like 2 domain maps to 1796 to 1963 (PAPWRFSGDG…TIRENVEDGC (168 aa)). Residue Asn1843 is glycosylated (N-linked (GlcNAc...) asparagine). Intrachain disulfides connect Cys1937/Cys1963, Cys1969/Cys1979, Cys1973/Cys1988, and Cys1990/Cys1999. Residues 1965–2000 (SRAQCPDHCPNHSSCQSSWDLSTCECDSGYVGTDCA) enclose the EGF-like 3; calcium-binding domain. The N-linked (GlcNAc...) asparagine glycan is linked to Asn1975. N-linked (GlcNAc...) asparagine glycosylation is found at Asn2016, Asn2028, Asn2071, and Asn2088. 4 disulfides stabilise this stretch: Cys2092-Cys2095, Cys2097-Cys2114, Cys2116-Cys2125, and Cys2128-Cys2140. The 48-residue stretch at 2095–2142 (CDCYSIGSFSGACNPLTGQCECREGVIGRRCDSCSNPYAEVTLSGCEV) folds into the Laminin EGF-like domain. N-linked (GlcNAc...) asparagine glycans are attached at residues Asn2196 and Asn2320. The segment covering 2553–2562 (QETQRLEIPS) has biased composition (basic and acidic residues). Disordered stretches follow at residues 2553 to 2582 (QETQRLEIPSRKIFSSSSPSSSSSSGSTEQ), 2610 to 2635 (HEIPPPVSSVEQQEASSDEDGEEREP), and 2654 to 2684 (VISPDSPEMLNPNYEGVSSTGSDEQPKGENE). Over residues 2567–2579 (SSSSPSSSSSSGS) the composition is skewed to low complexity. Residues 2653–2803 (EVISPDSPEM…AVIVDVIDPE (151 aa)) enclose the GAIN-B domain. Intrachain disulfides connect Cys2747–Cys2785 and Cys2762–Cys2787. A GPS region spans residues 2747–2803 (CVRWNSFTNQWTRLGCQTEIPDFDGDFNPAAQQAILVNCSCTHISSYAVIVDVIDPE). Residue Asn2784 is glycosylated (N-linked (GlcNAc...) asparagine). A helical transmembrane segment spans residues 2817-2837 (YSAFLVSLPLLLGVLLALALL). At 2838 to 2845 (RGQQTNSN) the chain is on the cytoplasmic side. Residues 2846–2866 (TIHQNIVLCVFCAELLFFVGM) form a helical membrane-spanning segment. Topologically, residues 2867–2883 (QSRRQLLESEFPCKLTA) are extracellular. Residues 2884-2904 (ICLHYFWLAAFAWTTVDCVHL) form a helical membrane-spanning segment. The Cytoplasmic segment spans residues 2905 to 2919 (YRMLTEMRDINHGPM). A helical transmembrane segment spans residues 2920 to 2940 (GFYFAMGYGAPAIVVGLSVGV). Residues 2941–2959 (RAHEYGNSLFCWLSVYEPV) are Extracellular-facing. Residues 2960 to 2980 (VWWLVGPIAGMSVVNLLILFV) traverse the membrane as a helical segment. The Cytoplasmic portion of the chain corresponds to 2981–3000 (SVKAAFTLKDHVLGFGNLRT). A helical transmembrane segment spans residues 3001–3021 (LLWLSVVSLPLMGVMWVLAVL). At 3022 to 3031 (AASEHSQLLS) the chain is on the extracellular side. Residues 3032 to 3052 (LLLSGVVLLHALFCLIGYCII) traverse the membrane as a helical segment. The Cytoplasmic segment spans residues 3053 to 3579 (NKRVRENLQR…RNIDDDETTV (527 aa)). Disordered stretches follow at residues 3111–3225 (GISA…TPAY), 3343–3377 (LYGRRGEYPDKYGSYKPPSHYGSEKDYPGGGSGSQ), 3458–3486 (YHQQQQQQQQHHLQDRLSEGSDKNGYHFP), and 3499–3579 (LSHT…ETTV). Low complexity predominate over residues 3113-3128 (SASSTTSRSTAKTSSS). Over residues 3167–3191 (RGGEEKPSRRQRKDSDSGSETDGRS) the composition is skewed to basic and acidic residues. 2 positions are modified to phosphoserine: Ser3199 and Ser3200. The span at 3208–3223 (ARSSGTHRSTAVSSTP) shows a compositional bias: polar residues. The segment covering 3343-3352 (LYGRRGEYPD) has biased composition (basic and acidic residues). The segment covering 3459–3468 (HQQQQQQQQH) has biased composition (low complexity). Basic and acidic residues predominate over residues 3469 to 3482 (HLQDRLSEGSDKNG). The segment covering 3501-3513 (HTQPPSLHGSQLM) has biased composition (polar residues).

This sequence belongs to the G-protein coupled receptor 2 family. As to quaternary structure, interacts with ATP6AP2 (via N-terminus). As to expression, in the pupal wing, expressed at relatively even levels in all regions. Abundant in 6-9 hours embryos. Expressed at higher levels in pupae than larvae.

Its subcellular location is the cell membrane. The protein resides in the apical cell membrane. Functionally, involved in the fz signaling pathway that controls wing tissue polarity. Also mediates homophilic cell adhesion. May play a role in initiating prehair morphogenesis. May play a critical role in tissue polarity and in formation of normal dendrite fields. During planar cell polarity, stabilizes asymmetric PCP domains together with ATP6AP2. The protein is Protocadherin-like wing polarity protein stan (stan) of Drosophila melanogaster (Fruit fly).